A 662-amino-acid polypeptide reads, in one-letter code: MSHVAVENALGLDQQFAGLDLNSSDNQSGGSTASKGRYIPPHLRNREATKGFYDKDSSGWSSSKDKDAYSSFGSRGDSRGKSSFFGDRGSGSRGRFDDRGRGDYDGIGGRGDRSGFGKFERGGNSRWCDKSDEDDWSKPLPPSERLEQELFSGGNTGINFEKYDDIPVEATGNNCPPHIESFSDVEMGEIIMGNIELTRYTRPTPVQKHAIPIIKEKRDLMACAQTGSGKTAAFLLPILSQIYADGPGEALRAMKENGRYGRRKQYPISLVLAPTRELAVQIYEEARKFSYRSRVRPCVVYGGAEIGQQIRDLERGCHLLVATPGRLVDMMERGKIGLDFCKYLVLDEADRMLDMGFEPQIRRIVEQDTMPPKGVRHTMMFSATFPKEIQMLARDFLDEYIFLAVGRVGSTSENITQKVVWVEEIDKRSFLLDLLNATGKDSLTLVFVETKKGADSLEDFLYHEGYACTSIHGDRSQRDREEALHQFRSGKSPILVATAVAARGLDISNVKHVINFDLPSDIEEYVHRIGRTGRVGNLGLATSFFNERNINITKDLLDLLVEAKQEVPSWLENMAFEHHYKGSSRGRSKSSRFSGGFGARDYRQSSGASSSSFSSSRASSSRSGGGGHGGSRGFGGGGYGGFYNSDGYGGNYNSQGVDWWGN.

Serine 2 carries the N-acetylserine modification. The segment at 2–139 (SHVAVENALG…KSDEDDWSKP (138 aa)) is required for TBK1 and IKBKE-dependent IFNB1 activation. The Nuclear export signal motif lies at 12–21 (LDQQFAGLDL). A disordered region spans residues 19-144 (LDLNSSDNQS…DWSKPLPPSE (126 aa)). Polar residues predominate over residues 21–34 (LNSSDNQSGGSTAS). The interval 38 to 44 (YIPPHLR) is interaction with EIF4E. Positions 44-68 (RNREATKGFYDKDSSGWSSSKDKDA) are enriched in basic and acidic residues. Lysine 55 is modified (N6-acetyllysine). Residues serine 82 and serine 90 each carry the phosphoserine modification. Basic and acidic residues predominate over residues 94-130 (GRFDDRGRGDYDGIGGRGDRSGFGKFERGGNSRWCDK). Residues 100 to 110 (GRGDYDGIGGR) are interaction with IKBKE. The tract at residues 100–662 (GRGDYDGIGG…NSQGVDWWGN (563 aa)) is interaction with GSK3B. Arginine 101 carries the post-translational modification Omega-N-methylarginine. A Phosphotyrosine modification is found at tyrosine 104. Omega-N-methylarginine is present on arginine 110. N6-acetyllysine is present on lysine 118. At serine 131 the chain carries Phosphoserine. Residues 139–172 (PLPPSERLEQELFSGGNTGINFEKYDDIPVEATG) are interaction with CHUK. The short motif at 180-208 (ESFSDVEMGEIIMGNIELTRYTRPTPVQK) is the Q motif element. Serine 183 bears the Phosphoserine mark. 200–207 (YTRPTPVQ) is an ATP binding site. Residues 211-403 (IPIIKEKRDL…RDFLDEYIFL (193 aa)) enclose the Helicase ATP-binding domain. A Glycyl lysine isopeptide (Lys-Gly) (interchain with G-Cter in SUMO2) cross-link involves residue lysine 215. 224–231 (AQTGSGKT) is a binding site for ATP. Positions 250–259 (ALRAMKENGR) are involved in stimulation of ATPase activity by DNA and RNA, nucleic acid binding and unwinding. The DEAD box signature appears at 347–350 (DEAD). A Helicase C-terminal domain is found at 414–575 (NITQKVVWVE…EVPSWLENMA (162 aa)). Serine 456 carries the phosphoserine modification. Positions 536 to 661 (GNLGLATSFF…YNSQGVDWWG (126 aa)) are interaction with NXF1. Omega-N-methylarginine is present on arginine 592. 3 positions are modified to phosphoserine: serine 594, serine 605, and serine 612. The tract at residues 601–633 (DYRQSSGASSSSFSSSRASSSRSGGGGHGGSRG) is disordered. A compositionally biased stretch (low complexity) spans 604 to 622 (QSSGASSSSFSSSRASSSR). An omega-N-methylarginine mark is found at arginine 617 and arginine 632. Gly residues predominate over residues 623 to 633 (SGGGGHGGSRG).

This sequence belongs to the DEAD box helicase family. DDX3/DED1 subfamily. As to quaternary structure, homodimer; can bind RNA as a monomer and as a dimer/oligomer. Interacts with TDRD3. When phosphorylated, interacts with IRF3; the interaction facilitates the phosphorylation and activation of IRF3 by IKBKE. Directly interacts with XPO1/CRM1. The interaction with XPO1/CMR1 is dependent on the DDX3X nuclear export signal motif and XPO1 interaction with GTPase RAN in its active GTP-bound form. Weakly interacts with TBKBP1/SINTBAD. Directly interacts with TRAF3; this interaction stimulates TRAF3 'Lys-63' ubiquitination. Interacts with CSNK1E in a Wnt-dependent manner; this interaction greatly enhances CSNK1E affinity for ATP, stimulates its kinase activity and promotes CSNK1E-mediated DVL2 phosphorylation. In the presence of RNA, the interaction is decreased. Also interacts with CSNK1D and stimulates its kinase activity. Interacts with TRPV4; this interaction is decreased when the TRPV4 channel is activated, leading to DDX3X relocalization to the nucleus. Interacts with MAP3K14/NIK. Directly interacts with CHUK/IKKA after physiological activation of the TLR7 and TLR8 pathways; this interaction enhances CHUK autophosphorylation. May associate with EIF4F complex, composed of at least EIF4A, EIF4E and EIF4G1/EIF4G3. Directly interacts with EIF4E in an RNA-independent manner; this interaction enhances EIF4E cap-binding ability. Directly interacts with EIF4G1 in an RNA-independent manner. DDX3X competes with EIF4G1 for interaction with EIF4E. Interacts with EIF4A1 and EIF2S1 in an RNA-independent manner. Associates with the eukaryotic translation initiation factor 3 (eIF-3) complex, including with EIF3B and EIF3C subunits. Directly interacts with IKBKE/IKKE; this interaction stimulates IKBKE activating autophosphorylation and is induced upon viral infection. Interacts with TBK1. Interacts with SP1; this interaction potentiates SP1-induced CDKN1A/WAF1/CIP1 transcription. Interacts with GSK3A and GSK3B. Interacts with several death receptors, inclusing FAS, TNFRSF10A and TNFRSF10B. Recruited to TNFRSF10B in the absence of receptor stimulation. When TNFRSF10B is stimulated, further recruited to the receptor and cleaved by caspases. A large proteolytic fragment remains associated with TNFRSF10B. Interacts (via C-terminus) with NXF1/TAP; this interaction may be partly involved in DDX3X nuclear export and in NXF1 localization to stress granules. Identified in an mRNP complex, composed of at least DHX9, DDX3X, ELAVL1, HNRNPU, IGF2BP1/2, ILF3, PABPC1, PCBP2, PTBP2, STAU1, STAU2, SYNCRIP and YBX1. The interaction with IGF2BP1/2 is RNA-dependent. Directly interacts with PABPC1/PABP1 in an RNA-independent manner. This interaction increases in stressed cells and decreases during cell recovery. Interacts (via C-terminus) with MAVS/IPS-1; this interaction potentiates MAVS-mediated IFNB induction. Interacts with ERCC6/CBS. Interacts with DHX33 in an RNA-independent manner. Interacts with DDX5 in the cytoplasm; this interaction may be more efficient when both proteins are unphosphorylated. Interacts with RIGI. Interacts with IFIH1/MDA5. Interacts with NCAPH; this interaction may be important for the NCAPH localization at condensing chromosomes during mitosis. Interacts with NLRP3 (via NACHT domain) under inflammasome-activating conditions. Interacts with CAPRIN1. Interacts with HNF4A and NR0B2/SHP in an RNA-independent manner; this interaction disrupts the interaction between HNF4 and NR0B2 that forms inactive heterodimers and enhances the formation of active HNF4 homodimers. Interacts with CREBBP/CBP. Interacts with EP300/p300. Interacts with gamma-tubulin. Interacts with phosphorylated TP53. Directly interacts with RELA/p65; this interaction may trap RELA in the cytoplasm, impairing nuclear relocalization upon TNF activating signals. In terms of processing, phosphorylated by TBK1; the phosphorylation is required for the synergistic induction of IFNB mediated by TBK1 and DDX3X. Phosphorylated by IKBKE. Also phosphorylated by CSNK1E; this phosphorylation may inhibit RNA-stimulated ATPase activity. Upon stimulation of death receptors, including TNFRSF10B, recruited to receptors and cleaved by caspases. Proteolytic fragments remain associated with the receptors. This cleavage presumably inactivates DDX3X anti-apoptotic function. Post-translationally, ubiquitinated by RNF39 via 'Lys-48'-linked ubiquitination; leading to proteasomal degradation. In terms of tissue distribution, expressed in ovary, including in germinal vesicle immature and metaphase II (MII) stage oocytes (at protein level). In the brain, expressed in the granule cells of the cerebellum and dentate gyrus, the pyramidal cells of the hippocampus, the ependymal cells lining the ventricles, choroid plexi and olfactory bulb. Also accumulates in the thalamic nuclei, the dorsal region of the colliculi and the pontine nucleus.

It localises to the cell membrane. It is found in the nucleus. The protein localises to the cytoplasm. The protein resides in the stress granule. Its subcellular location is the inflammasome. It localises to the cell projection. It is found in the lamellipodium. It carries out the reaction ATP + H2O = ADP + phosphate + H(+). Functionally, multifunctional ATP-dependent RNA helicase. The ATPase activity can be stimulated by various ribo-and deoxynucleic acids indicative for a relaxed substrate specificity. In vitro can unwind partially double-stranded DNA with a preference for 5'-single-stranded DNA overhangs. Binds RNA G-quadruplex (rG4s) structures, including those located in the 5'-UTR of NRAS mRNA. Involved in many cellular processes, which do not necessarily require its ATPase/helicase catalytic activities. Involved in transcription regulation. Positively regulates CDKN1A/WAF1/CIP1 transcription in an SP1-dependent manner, hence inhibits cell growth. This function requires its ATPase, but not helicase activity. CDKN1A up-regulation may be cell-type specific. Binds CDH1/E-cadherin promoter and represses its transcription. Potentiates HNF4A-mediated MTTP transcriptional activation; this function requires ATPase, but not helicase activity. Facilitates HNF4A acetylation, possibly catalyzed by CREBBP/EP300, thereby increasing the DNA-binding affinity of HNF4 to its response element. In addition, disrupts the interaction between HNF4 and SHP that forms inactive heterodimers and enhances the formation of active HNF4 homodimers. By promoting HNF4A-induced MTTP expression, may play a role in lipid homeostasis. May positively regulate TP53 transcription. Associates with mRNPs, predominantly with spliced mRNAs carrying an exon junction complex (EJC). Involved in the regulation of translation initiation. Not involved in the general process of translation, but promotes efficient translation of selected complex mRNAs, containing highly structured 5'-untranslated regions (UTR). This function depends on helicase activity. Might facilitate translation by resolving secondary structures of 5'-UTRs during ribosome scanning. Alternatively, may act prior to 43S ribosomal scanning and promote 43S pre-initiation complex entry to mRNAs exhibiting specific RNA motifs, by performing local remodeling of transcript structures located close to the cap moiety. Independently of its ATPase activity, promotes the assembly of functional 80S ribosomes and disassembles from ribosomes prior to the translation elongation process. Positively regulates the translation of cyclin E1/CCNE1 mRNA and consequently promotes G1/S-phase transition during the cell cycle. May activate TP53 translation. Required for endoplasmic reticulum stress-induced ATF4 mRNA translation. Independently of its ATPase/helicase activity, enhances IRES-mediated translation; this activity requires interaction with EIF4E. Independently of its ATPase/helicase activity, has also been shown specifically repress cap-dependent translation, possibly by acting on translation initiation factor EIF4E. Involved in innate immunity, acting as a viral RNA sensor. Binds viral RNAs and promotes the production of type I interferon (IFN-alpha and IFN-beta). Potentiate MAVS/RIGI-mediated induction of IFNB in early stages of infection. Enhances IFNB1 expression via IRF3/IRF7 pathway and participates in NFKB activation in the presence of MAVS and TBK1. Involved in TBK1 and IKBKE-dependent IRF3 activation leading to IFNB induction, acts as a scaffolding adapter that links IKBKE and IRF3 and coordinates their activation. Involved in the TLR7/TLR8 signaling pathway leading to type I interferon induction, including IFNA4 production. In this context, acts as an upstream regulator of IRF7 activation by MAP3K14/NIK and CHUK/IKKA. Stimulates CHUK autophosphorylation and activation following physiological activation of the TLR7 and TLR8 pathways, leading to MAP3K14/CHUK-mediated activatory phosphorylation of IRF7. Also stimulates MAP3K14/CHUK-dependent NF-kappa-B signaling. Negatively regulates TNF-induced IL6 and IL8 expression, via the NF-kappa-B pathway. May act by interacting with RELA/p65 and trapping it in the cytoplasm. May also bind IFNB promoter; the function is independent of IRF3. Involved in both stress and inflammatory responses. Independently of its ATPase/helicase activity, required for efficient stress granule assembly through its interaction with EIF4E, hence promotes survival in stressed cells. Independently of its helicase activity, regulates NLRP3 inflammasome assembly through interaction with NLRP3 and hence promotes cell death by pyroptosis during inflammation. This function is independent of helicase activity. Therefore DDX3X availability may be used to interpret stress signals and choose between pro-survival stress granules and pyroptotic NLRP3 inflammasomes and serve as a live-or-die checkpoint in stressed cells. In association with GSK3A/B, negatively regulates extrinsic apoptotic signaling pathway via death domain receptors, including TNFRSF10B, slowing down the rate of CASP3 activation following death receptor stimulation. Cleavage by caspases may inactivate DDX3X and relieve the inhibition. Independently of its ATPase/helicase activity, allosteric activator of CSNK1E. Stimulates CSNK1E-mediated phosphorylation of DVL2, thereby involved in the positive regulation of Wnt/beta-catenin signaling pathway. Also activates CSNK1A1 and CSNK1D in vitro, but it is uncertain if these targets are physiologically relevant. ATPase and casein kinase-activating functions are mutually exclusive. May be involved in mitotic chromosome segregation. This is ATP-dependent RNA helicase DDX3X (Ddx3x) from Mus musculus (Mouse).